We begin with the raw amino-acid sequence, 401 residues long: cAMP-dependent protein kinase type II-alpha regulatory subunit (401 aa).

At S2 the chain carries N-acetylserine. Positions 2 to 135 are dimerization and phosphorylation; that stretch reads SHIQIPPGLT…RLQEACKDIL (134 aa). Residues 43 to 65 form a disordered region; it reads ARSRASTPPAAPPSGSQDFDPGA. Residues 46–58 show a composition bias toward low complexity; the sequence is RASTPPAAPPSGS. Phosphoserine occurs at positions 48, 75, and 77. Phosphoserine; by PKA is present on S96. 3',5'-cyclic AMP contacts are provided by residues 136-257, E205, R214, 258-401, E335, and R344; these read LFKN…ESVP and LLKS…DPGQ. Position 212 is a phosphothreonine; by PDPK1 (T212). S347 and S392 each carry phosphoserine.

Belongs to the cAMP-dependent kinase regulatory chain family. The inactive form of the enzyme is composed of two regulatory chains and two catalytic chains. Activation by cAMP produces two active catalytic monomers and a regulatory dimer that binds four cAMP molecules. Interacts with AKAP4 and CBFA2T3. Interacts with the phosphorylated form of PJA2. Interacts with MYRIP; this interaction may link PKA to components of the exocytosis machinery, thus facilitating exocytosis, including insulin release. Forms a complex composed of PRKAR2A, GSK3B and GSKIP through GSKIP interaction; facilitates PKA-induced phosphorylation and regulates GSK3B activity. Interacts with ADCY8; inhibits adenylate cyclase activity through PKA phosphorylation. Post-translationally, a second phosphorylation site has not been located. In terms of processing, phosphorylation of Thr-212 by PDPK1 seems to attenuate the activity of PKA, perhaps by strengthening interaction between the regulatory and the catalytic subunits. Four types of regulatory chains are found: I-alpha, I-beta, II-alpha, and II-beta. Their expression varies among tissues and is in some cases constitutive and in others inducible.

It localises to the cytoplasm. It is found in the cell membrane. Its function is as follows. Regulatory subunit of the cAMP-dependent protein kinases involved in cAMP signaling in cells. Type II regulatory chains mediate membrane association by binding to anchoring proteins, including the MAP2 kinase. This chain is cAMP-dependent protein kinase type II-alpha regulatory subunit (PRKAR2A), found in Bos taurus (Bovine).